The sequence spans 201 residues: 3-isopropylmalate dehydratase small subunit (201 aa).

The protein belongs to the LeuD family. LeuD type 1 subfamily. Heterodimer of LeuC and LeuD.

It carries out the reaction (2R,3S)-3-isopropylmalate = (2S)-2-isopropylmalate. Its pathway is amino-acid biosynthesis; L-leucine biosynthesis; L-leucine from 3-methyl-2-oxobutanoate: step 2/4. Its function is as follows. Catalyzes the isomerization between 2-isopropylmalate and 3-isopropylmalate, via the formation of 2-isopropylmaleate. This is 3-isopropylmalate dehydratase small subunit from Buchnera aphidicola subsp. Baizongia pistaciae (strain Bp).